We begin with the raw amino-acid sequence, 129 residues long: Follitropin subunit beta (129 aa).

The first 18 residues, 1 to 18 (MKSVQFCFLFCCWKAICC), serve as a signal peptide directing secretion. 6 disulfide bridges follow: Cys-21/Cys-69, Cys-35/Cys-84, Cys-38/Cys-122, Cys-46/Cys-100, Cys-50/Cys-102, and Cys-105/Cys-112. Asn-25 and Asn-42 each carry an N-linked (GlcNAc...) asparagine glycan.

This sequence belongs to the glycoprotein hormones subunit beta family. Heterodimer. The active follitropin is a heterodimer composed of an alpha chain/CGA shared with other hormones and a unique beta chain/FSHB shown here.

The protein localises to the secreted. Functionally, together with the alpha chain CGA constitutes follitropin, the follicle-stimulating hormone, and provides its biological specificity to the hormone heterodimer. Binds FSHR, a G protein-coupled receptor, on target cells to activate downstream signaling pathways. Follitropin is involved in follicle development and spermatogenesis in reproductive organs. This is Follitropin subunit beta (FSHB) from Oryctolagus cuniculus (Rabbit).